The following is a 156-amino-acid chain: Movement protein P17 (156 aa).

The tract at residues 38-54 (AEDAEEEAIAAQEELEF) is homodimerization. Disordered regions lie at residues 55 to 80 (PEDE…EVSP) and 106 to 156 (ASYF…IKRG). Residues 57–156 (DEAQARHSCL…RAAPKLIKRG (100 aa)) form an RNA-binding region. Phosphoserine occurs at positions 71, 79, 137, and 140. The segment covering 144-156 (KLRRAAPKLIKRG) has biased composition (basic residues).

Belongs to the polerovirus movement protein family. Homodimer. Expressed as a nonphosphorylated 20kDa form and a phosphorylated 22kDa form. Phosphorylated by a host PKC-related kinase. Serine phosphorylation is required for plamodesma targeting.

It localises to the host cell junction. Its subcellular location is the host plasmodesma. It is found in the host chloroplast envelope. The protein localises to the host Golgi apparatus. The protein resides in the host mitochondrion outer membrane. Its function is as follows. Together with movement protein P3a, facilitates long-distance movement of virions in host. Transports viral genome to neighboring plant cells directly through plasmosdesmata, without any budding. The movement protein allows efficient cell to cell propagation, by bypassing the host cell wall barrier. Binds ssRNA. This is Movement protein P17 from Potato leafroll virus (strain Potato/Canada/Rowhani/1979) (PLrV).